Consider the following 510-residue polypeptide: Secreted RxLR effector protein 24 (510 aa).

An N-terminal signal peptide occupies residues 1–18 (MRGAFYVAIALLGSHTAA). The RxLR-dEER motif lies at 47-68 (RVLRERRDSKDKLTVHAGAEER).

Belongs to the RxLR effector family.

It is found in the secreted. Its subcellular location is the host nucleus. Secreted effector that acts as an elicitor that induces cell death in host plant cells. The protein is Secreted RxLR effector protein 24 of Plasmopara viticola (Downy mildew of grapevine).